Reading from the N-terminus, the 258-residue chain is Imidazole glycerol phosphate synthase subunit HisF (258 aa).

Residues Asp-11 and Asp-130 contribute to the active site.

This sequence belongs to the HisA/HisF family. Heterodimer of HisH and HisF.

The protein localises to the cytoplasm. The catalysed reaction is 5-[(5-phospho-1-deoxy-D-ribulos-1-ylimino)methylamino]-1-(5-phospho-beta-D-ribosyl)imidazole-4-carboxamide + L-glutamine = D-erythro-1-(imidazol-4-yl)glycerol 3-phosphate + 5-amino-1-(5-phospho-beta-D-ribosyl)imidazole-4-carboxamide + L-glutamate + H(+). It participates in amino-acid biosynthesis; L-histidine biosynthesis; L-histidine from 5-phospho-alpha-D-ribose 1-diphosphate: step 5/9. Functionally, IGPS catalyzes the conversion of PRFAR and glutamine to IGP, AICAR and glutamate. The HisF subunit catalyzes the cyclization activity that produces IGP and AICAR from PRFAR using the ammonia provided by the HisH subunit. The chain is Imidazole glycerol phosphate synthase subunit HisF from Roseiflexus sp. (strain RS-1).